The sequence spans 370 residues: DNA replication and repair protein RecF (370 aa).

Residue 30–37 participates in ATP binding; that stretch reads GENAQGKT.

This sequence belongs to the RecF family. As to quaternary structure, recruited to foci following DNA damage; probably interacts with RecO.

The protein resides in the cytoplasm. The protein localises to the nucleoid. The RecF protein is involved in DNA metabolism; it is required for DNA replication and normal SOS inducibility. RecF binds preferentially to single-stranded, linear DNA. It also seems to bind ATP. Is recruited to repair centers, foci that are the site of double-strand DNA break(s) after RecN and RecO; recruitment may depend on RecO. A positive modulator of RecA. The protein is DNA replication and repair protein RecF of Bacillus subtilis (strain 168).